Here is a 324-residue protein sequence, read N- to C-terminus: tRNA uridine(34) hydroxylase (324 aa).

The 95-residue stretch at 145–239 (NDKKTIFIDM…YVHDARKNGL (95 aa)) folds into the Rhodanese domain. The Cysteine persulfide intermediate role is filled by cysteine 199.

Belongs to the TrhO family.

The enzyme catalyses uridine(34) in tRNA + AH2 + O2 = 5-hydroxyuridine(34) in tRNA + A + H2O. Catalyzes oxygen-dependent 5-hydroxyuridine (ho5U) modification at position 34 in tRNAs. The polypeptide is tRNA uridine(34) hydroxylase (Buchnera aphidicola subsp. Acyrthosiphon pisum (strain Tuc7)).